Reading from the N-terminus, the 86-residue chain is Protein Tat (86 aa).

The interval 1–21 (MDPVDPNIEPWNHPGSQPKTA) is disordered. Residues 1 to 24 (MDPVDPNIEPWNHPGSQPKTACNR) form an interaction with human CREBBP region. A transactivation region spans residues 1 to 48 (MDPVDPNIEPWNHPGSQPKTACNRCHCKKCCYHCQVCFITKGLGISYG). Residues Cys-22, Cys-25, and Cys-27 each coordinate Zn(2+). The interval 22-37 (CNRCHCKKCCYHCQVC) is cysteine-rich. Lys-28 carries the post-translational modification N6-acetyllysine; by host PCAF. Residues Cys-30, His-33, Cys-34, and Cys-37 each coordinate Zn(2+). The core stretch occupies residues 38–48 (FITKGLGISYG). Positions 47-86 (YGRKKRRQRRRPSQGGQTHQDPIPKQPSSQPRGDPTGPKE) are disordered. Basic residues predominate over residues 48–58 (GRKKRRQRRRP). The Nuclear localization signal, RNA-binding (TAR), and protein transduction motif lies at 49 to 57 (RKKRRQRRR). The interval 49–86 (RKKRRQRRRPSQGGQTHQDPIPKQPSSQPRGDPTGPKE) is interaction with the host capping enzyme RNGTT. An N6-acetyllysine; by host EP300 and GCN5L2 mark is found at Lys-50 and Lys-51. Asymmetric dimethylarginine; by host PRMT6 is present on residues Arg-52 and Arg-53. A compositionally biased stretch (polar residues) spans 60 to 77 (QGGQTHQDPIPKQPSSQP). A Glycyl lysine isopeptide (Lys-Gly) (interchain with G-Cter in ubiquitin) cross-link involves residue Lys-71. A Cell attachment site motif is present at residues 78–80 (RGD).

This sequence belongs to the lentiviruses Tat family. In terms of assembly, interacts with host CCNT1. Associates with the P-TEFb complex composed at least of Tat, P-TEFb (CDK9 and CCNT1), TAR RNA, RNA Pol II. Recruits the HATs CREBBP, TAF1/TFIID, EP300, PCAF and GCN5L2. Interacts with host KAT5/Tip60; this interaction targets the latter to degradation. Interacts with the host deacetylase SIRT1. Interacts with host capping enzyme RNGTT; this interaction stimulates RNGTT. Binds to host KDR, and to the host integrins ITGAV/ITGB3 and ITGA5/ITGB1. Interacts with host KPNB1/importin beta-1 without previous binding to KPNA1/importin alpha-1. Interacts with EIF2AK2. Interacts with host nucleosome assembly protein NAP1L1; this interaction may be required for the transport of Tat within the nucleus, since the two proteins interact at the nuclear rim. Interacts with host C1QBP/SF2P32; this interaction involves lysine-acetylated Tat. Interacts with the host chemokine receptors CCR2, CCR3 and CXCR4. Interacts with host DPP4/CD26; this interaction may trigger an anti-proliferative effect. Interacts with host LDLR. Interacts with the host extracellular matrix metalloproteinase MMP1. Interacts with host PRMT6; this interaction mediates Tat's methylation. Interacts with, and is ubiquitinated by MDM2/Hdm2. Interacts with host PSMC3 and HTATIP2. Interacts with STAB1; this interaction may overcome SATB1-mediated repression of IL2 and IL2RA (interleukin) in T cells by binding to the same domain than HDAC1. Interacts (when acetylated) with human CDK13, thereby increasing HIV-1 mRNA splicing and promoting the production of the doubly spliced HIV-1 protein Nef. Interacts with host TBP; this interaction modulates the activity of transcriptional pre-initiation complex. Interacts with host RELA. Interacts with host PLSCR1; this interaction negatively regulates Tat transactivation activity by altering its subcellular distribution. In terms of processing, asymmetrical arginine methylation by host PRMT6 seems to diminish the transactivation capacity of Tat and affects the interaction with host CCNT1. Post-translationally, acetylation by EP300, CREBBP, GCN5L2/GCN5 and PCAF regulates the transactivation activity of Tat. EP300-mediated acetylation of Lys-50 promotes dissociation of Tat from the TAR RNA through the competitive binding to PCAF's bromodomain. In addition, the non-acetylated Tat's N-terminus can also interact with PCAF. PCAF-mediated acetylation of Lys-28 enhances Tat's binding to CCNT1. Lys-50 is deacetylated by SIRT1. Polyubiquitination by host MDM2 does not target Tat to degradation, but activates its transactivation function and fosters interaction with CCNT1 and TAR RNA. In terms of processing, phosphorylated by EIF2AK2 on serine and threonine residues adjacent to the basic region important for TAR RNA binding and function. Phosphorylation of Tat by EIF2AK2 is dependent on the prior activation of EIF2AK2 by dsRNA.

It is found in the host nucleus. The protein resides in the host nucleolus. The protein localises to the host cytoplasm. It localises to the secreted. Its function is as follows. Transcriptional activator that increases RNA Pol II processivity, thereby increasing the level of full-length viral transcripts. Recognizes a hairpin structure at the 5'-LTR of the nascent viral mRNAs referred to as the transactivation responsive RNA element (TAR) and recruits the cyclin T1-CDK9 complex (P-TEFb complex) that will in turn hyperphosphorylate the RNA polymerase II to allow efficient elongation. The CDK9 component of P-TEFb and other Tat-activated kinases hyperphosphorylate the C-terminus of RNA Pol II that becomes stabilized and much more processive. Other factors such as HTATSF1/Tat-SF1, SUPT5H/SPT5, and HTATIP2 are also important for Tat's function. Besides its effect on RNA Pol II processivity, Tat induces chromatin remodeling of proviral genes by recruiting the histone acetyltransferases (HATs) CREBBP, EP300 and PCAF to the chromatin. This also contributes to the increase in proviral transcription rate, especially when the provirus integrates in transcriptionally silent region of the host genome. To ensure maximal activation of the LTR, Tat mediates nuclear translocation of NF-kappa-B by interacting with host RELA. Through its interaction with host TBP, Tat may also modulate transcription initiation. Tat can reactivate a latently infected cell by penetrating in it and transactivating its LTR promoter. In the cytoplasm, Tat is thought to act as a translational activator of HIV-1 mRNAs. In terms of biological role, extracellular circulating Tat can be endocytosed by surrounding uninfected cells via the binding to several surface receptors such as CD26, CXCR4, heparan sulfate proteoglycans (HSPG) or LDLR. Neurons are rarely infected, but they internalize Tat via their LDLR. Through its interaction with nuclear HATs, Tat is potentially able to control the acetylation-dependent cellular gene expression. Modulates the expression of many cellular genes involved in cell survival, proliferation or in coding for cytokines or cytokine receptors. Tat plays a role in T-cell and neurons apoptosis. Tat induced neurotoxicity and apoptosis probably contribute to neuroAIDS. Circulating Tat also acts as a chemokine-like and/or growth factor-like molecule that binds to specific receptors on the surface of the cells, affecting many cellular pathways. In the vascular system, Tat binds to ITGAV/ITGB3 and ITGA5/ITGB1 integrins dimers at the surface of endothelial cells and competes with bFGF for heparin-binding sites, leading to an excess of soluble bFGF. The sequence is that of Protein Tat from Human immunodeficiency virus type 1 group M subtype D (isolate Z2/CDC-Z34) (HIV-1).